A 212-amino-acid chain; its full sequence is Large ribosomal subunit protein uL4 (212 aa).

Residues 43–52 (NNRQGTASTK) show a composition bias toward polar residues. The tract at residues 43–77 (NNRQGTASTKTRSEVRGGGRKPWRQKGTGRARAGS) is disordered. A compositionally biased stretch (basic residues) spans 60 to 71 (GGRKPWRQKGTG).

This sequence belongs to the universal ribosomal protein uL4 family. As to quaternary structure, part of the 50S ribosomal subunit.

Functionally, one of the primary rRNA binding proteins, this protein initially binds near the 5'-end of the 23S rRNA. It is important during the early stages of 50S assembly. It makes multiple contacts with different domains of the 23S rRNA in the assembled 50S subunit and ribosome. In terms of biological role, forms part of the polypeptide exit tunnel. The sequence is that of Large ribosomal subunit protein uL4 from Trichodesmium erythraeum (strain IMS101).